The chain runs to 332 residues: MYYKYIFQNGYLKHIKIFMTVFMELLRLLNHINLYNIIHHEELFENGIDNETFFYLFKIGFLGDIIDIINHVVSNTKTITVDFMDKILVVYKNKLIQYAIDDICINSACYDKIYKILIDKSLETDNLNLFNFIVKELDTVFMDVDESKLTFRQKNRLDSIKNKHSYNSTRINSIIKICLSKHSPVKNCPKIFSQLITDLGGVMEMIDHDFYKIFYRGIINYAEIVCENLIHTSPELIDDLLLKARRMEMFQLLVDHGANYKKIYKTTPDEKQKKSLKRFINNLKDKEYLEDIDDIDDSDESDDSDDSEDSDSFGDSDSSGNSEDSEDSDNSE.

Acidic residues-rich tracts occupy residues 290-314 and 323-332; these read EDID…DSFG and EDSEDSDNSE. The disordered stretch occupies residues 290 to 332; that stretch reads EDIDDIDDSDESDDSDDSEDSDSFGDSDSSGNSEDSEDSDNSE.

Belongs to the mimivirus L17x/L18x family.

This is an uncharacterized protein from Acanthamoeba polyphaga mimivirus (APMV).